The primary structure comprises 550 residues: GMP synthase [glutamine-hydrolyzing] (550 aa).

The Glutamine amidotransferase type-1 domain maps to 39-232; sequence RILILDFGSQ…VHKICGCGGL (194 aa). Cys116 acts as the Nucleophile in catalysis. Residues His206 and Glu208 contribute to the active site. A GMPS ATP-PPase domain is found at 233 to 425; the sequence is WTPEHIIDLR…LGLPHSMIYR (193 aa). 260 to 266 is an ATP binding site; it reads SGGVDSS.

In terms of assembly, homodimer.

It catalyses the reaction XMP + L-glutamine + ATP + H2O = GMP + L-glutamate + AMP + diphosphate + 2 H(+). It participates in purine metabolism; GMP biosynthesis; GMP from XMP (L-Gln route): step 1/1. In terms of biological role, catalyzes the synthesis of GMP from XMP. This Acinetobacter baylyi (strain ATCC 33305 / BD413 / ADP1) protein is GMP synthase [glutamine-hydrolyzing].